Here is a 3020-residue protein sequence, read N- to C-terminus: Protein furry homolog (3020 aa).

Tyr213 carries the post-translational modification Phosphotyrosine. Disordered regions lie at residues 1378-1404 (GSSP…LKGN), 1529-1554 (ASGT…ESKI), and 1746-1773 (SSPV…GNLP). 2 positions are modified to phosphoserine: Ser1382 and Ser1383. A compositionally biased stretch (low complexity) spans 1752–1772 (SGLNSSSTSSSISLGGSSGNL). 2 positions are modified to phosphoserine: Ser1936 and Ser1940. A compositionally biased stretch (low complexity) spans 1937-1956 (RSSSPDLSSSSKLTASRKST). 2 disordered regions span residues 1937–2042 (RSSS…PSHV) and 2355–2384 (LQNS…SNSN). Gly residues predominate over residues 1966–1976 (PGSGGGGGGSG). The span at 2016–2042 (ACTQQGLSSKTRSNSSLKESLTDPSHV) shows a compositional bias: polar residues. The span at 2369–2384 (AVTRSASSTSSGSNSN) shows a compositional bias: low complexity. Residues Ser2427 and Ser2428 each carry the phosphoserine modification. Positions 2439 to 2458 (TSLVSSEDGPREQENMDDTN) are disordered. Position 2495 is a phosphoserine (Ser2495). The disordered stretch occupies residues 2508–2535 (EERQLSRSTPSLNKMSHEDSDESSEEDL). Thr2516 is modified (phosphothreonine; by CDK1). Residues 2526–2535 (DSDESSEEDL) are compositionally biased toward acidic residues. At Ser2815 the chain carries Phosphoserine.

It belongs to the furry protein family. When phosphorylated by CDK1, interacts with PLK1; this interaction occurs in mitotic cells, but not in interphase cells, and leads to further FRY phosphorylation by PLK1. Phosphorylated by AURKA, CDK1 and PLK1.

It is found in the cytoplasm. It localises to the cytoskeleton. Its subcellular location is the microtubule organizing center. The protein localises to the centrosome. The protein resides in the spindle pole. Its function is as follows. Plays a crucial role in the structural integrity of mitotic centrosomes and in the maintenance of spindle bipolarity by promoting PLK1 activity at the spindle poles in early mitosis. May function as a scaffold promoting the interaction between AURKA and PLK1, thereby enhancing AURKA-mediated PLK1 phosphorylation. The polypeptide is Protein furry homolog (Fry) (Mus musculus (Mouse)).